A 177-amino-acid polypeptide reads, in one-letter code: B9 domain-containing protein 2 (177 aa).

A C2 B9-type domain is found at 2-118 (AEVHIIGQIL…EIGTWKVAPN (117 aa)).

The protein belongs to the B9D family. Probable component of the tectonic-like complex (also named MKS complex), composed of B9d1, B9d2, Cc2d2a, Mks1 and tctn. Expressed in chordotonal neurons in the antennae (at protein level). Expressed in spermatids (at protein level).

It is found in the cytoplasm. It localises to the cytoskeleton. The protein localises to the cilium basal body. In terms of biological role, probable component of the tectonic-like complex (also named MKS complex), a complex localized at the transition zone of primary cilia. Has a role in ciliary structure and function. The chain is B9 domain-containing protein 2 from Drosophila melanogaster (Fruit fly).